We begin with the raw amino-acid sequence, 328 residues long: MSPKTTKKIAILTSGGDAPGMNATLVYLTRYATSSEIEVFFVKNGYYGLYHDELVPAHQLDLSNSLFSAGTVIGSKRFVEFKELKVREQAAQNLKKRQIDYLVVIGGDGSYMGAKLLSELGVNCYCLPGTIDNDINSSEFTIGFLTALESIKVNVQAVYHTTKSHERVAIVEVMGRHCGDLAIFGALATNADFVVTPSNKMDLKQLESAVKKILQHQNHCVVIVSENIYGFDGYPSLTAIKQHFDANNMKCNLVSLGHTQRGFAPTSLELVQISLMAQHTINLIGQNKVNQVIGNKANVPVNYDFDQAFNMPPVDRSALIAVINKNII.

Residues Gly16, 77–78, and 107–110 each bind ATP; these read RF and GDGS. Asp108 serves as a coordination point for Mg(2+). Substrate is bound by residues 130-132, Arg167, 174-176, Glu226, and 258-261; these read TID, MGR, and HTQR. The active-site Proton acceptor is the Asp132.

It belongs to the phosphofructokinase type A (PFKA) family. As to quaternary structure, homotetramer. It depends on Mg(2+) as a cofactor.

The protein localises to the cytoplasm. It catalyses the reaction beta-D-fructose 6-phosphate + ATP = beta-D-fructose 1,6-bisphosphate + ADP + H(+). It participates in carbohydrate degradation; glycolysis; D-glyceraldehyde 3-phosphate and glycerone phosphate from D-glucose: step 3/4. In terms of biological role, catalyzes the phosphorylation of D-fructose 6-phosphate to fructose 1,6-bisphosphate by ATP, the first committing step of glycolysis. In Mycoplasma pneumoniae (strain ATCC 29342 / M129 / Subtype 1) (Mycoplasmoides pneumoniae), this protein is Probable ATP-dependent 6-phosphofructokinase (pfkA).